A 198-amino-acid polypeptide reads, in one-letter code: Recombination protein RecR (198 aa).

A C4-type zinc finger spans residues 58-73 (CSICGNFTDSDPCAIC). The region spanning 81 to 175 (SIICVIEEPK…KVTRIAHGIP (95 aa)) is the Toprim domain.

Belongs to the RecR family.

May play a role in DNA repair. It seems to be involved in an RecBC-independent recombinational process of DNA repair. It may act with RecF and RecO. The sequence is that of Recombination protein RecR from Clostridium kluyveri (strain NBRC 12016).